The chain runs to 802 residues: Copper-exporting P-type ATPase (802 aa).

HMA domains lie at 5-71 (KEIA…YHVV) and 73-139 (EKAE…YKLK). Residues C16, C19, C84, and C87 each coordinate Cu(+). A run of 6 helical transmembrane segments spans residues 162–181 (LIFSAVLSFPLLWAMVSHFT), 196–218 (WMQFALATPVQFLIGWPFYVGAY), 230–249 (VLVALGTTAAYAYSLYLTFQ), 259–278 (GLYYETSAILLTLILLGKLF), 412–434 (ISGIFVPIVLGIAVLTFLIWYLW), and 447–469 (FIAVLVIACPCALGLATPTSIMA). The 4-aspartylphosphate intermediate role is filled by D499. Mg(2+)-binding residues include D698 and D702. The next 2 membrane-spanning stretches (helical) occupy residues 756 to 775 (LFWALGYNSLGIPIAALGFL) and 779 to 796 (IAGAAMAFSSVSVVLNAL).

Belongs to the cation transport ATPase (P-type) (TC 3.A.3) family. Type IB subfamily. Monomer at sub-stoichiometric copper concentrations. Homodimer at higher copper concentrations. Forms a heterodimer (electrostatic interactions) with CopZ during the transfer of Cu(+).

The protein resides in the cell membrane. It catalyses the reaction Cu(+)(in) + ATP + H2O = Cu(+)(out) + ADP + phosphate + H(+). Functionally, involved in copper export. The protein is Copper-exporting P-type ATPase (copA) of Bacillus subtilis (strain 168).